We begin with the raw amino-acid sequence, 378 residues long: MGQSKKLNKQPRSLSPLVLLSGISKSFDGKEVISQLDLTINNGEFLTLLGPSGCGKTTVLRLIAGLETVDAGHIMLDNQDITHVPAENRYVNTVFQSYALFPHMTVFENVAFGLRMQKTPAAEIAPRVTDALRMVQLEEFAQRKPHQLSGGQQQRVAIARAVVNKPRLLLLDESLSALDYKLRKQMQNELKALQRKLGITFVFVTHDQEEALTMSDRIVVMRNGVIEQDGTPREIYEEPKNLFVAGFIGEINRFDATVIERLDEQRVRASVEGRECNIYVNFAVELGQKLNVLLRPEDLRVEEINDDNHIEGLIGYVRERNYKGMTLESVVELENGKMVMVSEFFNEDDPDFDHSLDQKMAISWVESWEVVLADEEHK.

Residues 18–248 form the ABC transporter domain; it reads VLLSGISKSF…PKNLFVAGFI (231 aa). Residue 50-57 coordinates ATP; it reads GPSGCGKT.

Belongs to the ABC transporter superfamily. Spermidine/putrescine importer (TC 3.A.1.11.1) family. As to quaternary structure, the complex is composed of two ATP-binding proteins (PotA), two transmembrane proteins (PotB and PotC) and a solute-binding protein (PotD).

The protein resides in the cell inner membrane. It catalyses the reaction ATP + H2O + polyamine-[polyamine-binding protein]Side 1 = ADP + phosphate + polyamineSide 2 + [polyamine-binding protein]Side 1.. Part of the ABC transporter complex PotABCD involved in spermidine/putrescine import. Responsible for energy coupling to the transport system. This chain is Spermidine/putrescine import ATP-binding protein PotA, found in Salmonella typhi.